The sequence spans 478 residues: Ribulose bisphosphate carboxylase large chain (478 aa).

A propeptide spanning residues M1 to S2 is cleaved from the precursor. 2 residues coordinate substrate: N123 and T173. Residue K175 is the Proton acceptor of the active site. Residue K177 participates in substrate binding. Residues K201, D203, and E204 each coordinate Mg(2+). Residue K201 is modified to N6-carboxylysine. Phosphoserine is present on S208. H294 serves as the catalytic Proton acceptor. Substrate is bound by residues R295 and H327. Residue T330 is modified to Phosphothreonine. Residue S379 participates in substrate binding.

It belongs to the RuBisCO large chain family. Type I subfamily. Heterohexadecamer of 8 large chains and 8 small chains; disulfide-linked. The disulfide link is formed within the large subunit homodimers. Mg(2+) serves as cofactor. The disulfide bond which can form in the large chain dimeric partners within the hexadecamer appears to be associated with oxidative stress and protein turnover.

The protein localises to the plastid. The protein resides in the chloroplast. It carries out the reaction 2 (2R)-3-phosphoglycerate + 2 H(+) = D-ribulose 1,5-bisphosphate + CO2 + H2O. The catalysed reaction is D-ribulose 1,5-bisphosphate + O2 = 2-phosphoglycolate + (2R)-3-phosphoglycerate + 2 H(+). Functionally, ruBisCO catalyzes two reactions: the carboxylation of D-ribulose 1,5-bisphosphate, the primary event in carbon dioxide fixation, as well as the oxidative fragmentation of the pentose substrate in the photorespiration process. Both reactions occur simultaneously and in competition at the same active site. In Lepidium virginicum (Virginia pepperweed), this protein is Ribulose bisphosphate carboxylase large chain.